The following is a 131-amino-acid chain: Peptide methionine sulfoxide reductase MsrB (131 aa).

The MsrB domain occupies 8 to 130; it reads LEEWRAMLDP…NSVCLDLKPR (123 aa). Zn(2+) is bound by residues Cys47, Cys50, Cys96, and Cys99. Cys119 acts as the Nucleophile in catalysis.

Belongs to the MsrB Met sulfoxide reductase family. The cofactor is Zn(2+).

The enzyme catalyses L-methionyl-[protein] + [thioredoxin]-disulfide + H2O = L-methionyl-(R)-S-oxide-[protein] + [thioredoxin]-dithiol. This Pseudomonas entomophila (strain L48) protein is Peptide methionine sulfoxide reductase MsrB.